Consider the following 243-residue polypeptide: Probable transcriptional regulatory protein LCABL_11860 (243 aa).

The disordered stretch occupies residues 1–23 (MSGHSKWHNIQGRKNAQDSKRGK).

The protein belongs to the TACO1 family.

It localises to the cytoplasm. This chain is Probable transcriptional regulatory protein LCABL_11860, found in Lacticaseibacillus casei (strain BL23) (Lactobacillus casei).